The primary structure comprises 394 residues: Na(+)/H(+) antiporter NhaA (394 aa).

11 helical membrane passes run 11-31, 59-79, 95-115, 125-145, 155-175, 177-197, 203-220, 254-274, 296-316, 328-348, and 365-385; these read LEAASGILLLVSALLAMIFAN, LLMWVNDGFMAVFFILVGMEV, IFPAVAALGGMIIPALVYWFI, GWAIPMATDIAFALGIVALLS, FLLALAIIDDLGAIIVIALFF, HEMSMQALTIASIAIVILVAM, TGLINYAIIGTILWASVL, ALAPWCSFAILPLFAFSNAGV, LIIGKPVGVFLFSYVAVLLGI, IFAIAVLCGIGFTMSMFIAGL, and LGILMGTFVAAIIGYFLLKIT.

It belongs to the NhaA Na(+)/H(+) (TC 2.A.33) antiporter family.

It localises to the cell inner membrane. The enzyme catalyses Na(+)(in) + 2 H(+)(out) = Na(+)(out) + 2 H(+)(in). Functionally, na(+)/H(+) antiporter that extrudes sodium in exchange for external protons. The chain is Na(+)/H(+) antiporter NhaA from Actinobacillus pleuropneumoniae serotype 7 (strain AP76).